The following is a 299-amino-acid chain: MQTSSEPAASETAALLGKPLADRVMRGVRADLKAWAQLDPPFEPQLVSVLASDDEASQVYVQSKAKRAKKLGVAFRVVDLGAAATQEALEQTLRELSADPAVHGIVLELPLAAGLDADAALLHIAARKDIEGLSPANLALIAAGREPEALLPPTPRSVRFLLRHALGDDLRGLRVAVIGPGRTVGRPLLFMLNNKGATVTLCNEHTRDLAAVLAAQDAVVVAVGKAGLLRPEQVQPEHVVIDAGINVQESGDMVGDALPELPVRAQTPVPGGVGPLTSALMYQNLVRGVKLQRGEPVDD.

NADP(+)-binding positions include 179–181 and Ile-245; that span reads GPG.

The protein belongs to the tetrahydrofolate dehydrogenase/cyclohydrolase family. As to quaternary structure, homodimer.

It catalyses the reaction (6R)-5,10-methylene-5,6,7,8-tetrahydrofolate + NADP(+) = (6R)-5,10-methenyltetrahydrofolate + NADPH. The catalysed reaction is (6R)-5,10-methenyltetrahydrofolate + H2O = (6R)-10-formyltetrahydrofolate + H(+). It participates in one-carbon metabolism; tetrahydrofolate interconversion. Functionally, catalyzes the oxidation of 5,10-methylenetetrahydrofolate to 5,10-methenyltetrahydrofolate and then the hydrolysis of 5,10-methenyltetrahydrofolate to 10-formyltetrahydrofolate. This is Bifunctional protein FolD from Deinococcus radiodurans (strain ATCC 13939 / DSM 20539 / JCM 16871 / CCUG 27074 / LMG 4051 / NBRC 15346 / NCIMB 9279 / VKM B-1422 / R1).